The chain runs to 155 residues: Egg cell-secreted protein 1.5 (155 aa).

The signal sequence occupies residues 1-32; that stretch reads MATKSTSKPLLLSFLMMSYLISTFHVITVAEG.

This sequence belongs to the plant egg cell-secreted peptide family. In terms of tissue distribution, restricted to female reproductive tissues, specifically accumulating in storage vesicles of the unfertilized egg cell.

The protein resides in the cytoplasmic vesicle. Its subcellular location is the secreted. Involved in the regulation of gamete interactions during the double fertilization and to prevent multiple-pollen tube attraction; mediates the redistribution of the gamete fusogen HAP2/GCS1 to the cell surface after secretion upon sperm arrival. In Arabidopsis thaliana (Mouse-ear cress), this protein is Egg cell-secreted protein 1.5 (EC1.5).